We begin with the raw amino-acid sequence, 100 residues long: Integration host factor subunit beta (100 aa).

The interval 53 to 100 (LHHRPPRIGRNPKTGEPVALPGKYVPHFKPGKELRDRVNAGRHNPIQS) is disordered. Residues 82–91 (PGKELRDRVN) show a composition bias toward basic and acidic residues.

Belongs to the bacterial histone-like protein family. As to quaternary structure, heterodimer of an alpha and a beta chain.

Functionally, this protein is one of the two subunits of integration host factor, a specific DNA-binding protein that functions in genetic recombination as well as in transcriptional and translational control. The sequence is that of Integration host factor subunit beta from Alkalilimnicola ehrlichii (strain ATCC BAA-1101 / DSM 17681 / MLHE-1).